A 473-amino-acid polypeptide reads, in one-letter code: 23S rRNA (uracil(1939)-C(5))-methyltransferase RlmD (473 aa).

Residues 6-27 (KPSKGKNKSNVKGRVRGAGSGE) form a disordered region. Over residues 8-20 (SKGKNKSNVKGRV) the composition is skewed to basic residues. Positions 42-99 (DDINAANEAVTIDGMDWQGQGVARGDTLYFVDGALPGETVEIKALSSNKQIVNAKVTK) constitute a TRAM domain. Residues cysteine 112, cysteine 118, cysteine 121, and cysteine 199 each coordinate [4Fe-4S] cluster. S-adenosyl-L-methionine contacts are provided by glutamine 304, phenylalanine 333, asparagine 338, glutamate 354, aspartate 381, and aspartate 402. The active-site Nucleophile is the cysteine 428.

The protein belongs to the class I-like SAM-binding methyltransferase superfamily. RNA M5U methyltransferase family. RlmD subfamily.

The catalysed reaction is uridine(1939) in 23S rRNA + S-adenosyl-L-methionine = 5-methyluridine(1939) in 23S rRNA + S-adenosyl-L-homocysteine + H(+). Its function is as follows. Catalyzes the formation of 5-methyl-uridine at position 1939 (m5U1939) in 23S rRNA. This is 23S rRNA (uracil(1939)-C(5))-methyltransferase RlmD from Alteromonas naphthalenivorans.